Consider the following 310-residue polypeptide: Probable deoxyhypusine synthase (310 aa).

Lys280 acts as the Nucleophile in catalysis.

It belongs to the deoxyhypusine synthase family. The cofactor is NAD(+).

It carries out the reaction [eIF5A protein]-L-lysine + spermidine = [eIF5A protein]-deoxyhypusine + propane-1,3-diamine. It participates in protein modification; eIF5A hypusination. Its function is as follows. Catalyzes the NAD-dependent oxidative cleavage of spermidine and the subsequent transfer of the butylamine moiety of spermidine to the epsilon-amino group of a specific lysine residue of the eIF-5A precursor protein to form the intermediate deoxyhypusine residue. The sequence is that of Probable deoxyhypusine synthase (dys) from Aeropyrum pernix (strain ATCC 700893 / DSM 11879 / JCM 9820 / NBRC 100138 / K1).